We begin with the raw amino-acid sequence, 719 residues long: Leucine-rich repeat and fibronectin type-III domain-containing protein 5 (719 aa).

Residues 1–17 (MEKILFYLFLIGIAVKA) form the signal peptide. One can recognise an LRRNT domain in the interval 18–51 (QICPKRCVCQILSPNLATLCAKKGLLFVPPNIDR). Over 18-529 (QICPKRCVCQ…MQSQFLGGTM (512 aa)) the chain is Extracellular. LRR repeat units lie at residues 52 to 73 (RTVE…DFAN), 76 to 97 (SLVD…AFAD), 100 to 121 (NLRA…MFSG), 124 to 145 (NLHH…AFDD), 148 to 169 (ALEE…AVEK), 172 to 193 (SLHT…TFSH), and 196 to 217 (KMTR…PLFQ). An N-linked (GlcNAc...) asparagine glycan is attached at N73. Residues 240 to 286 (NPLHCNCELLWLRRLSREDDLETCASPPLLTGRYFWSIPEEEFLCEP) form the LRRCT domain. In terms of domain architecture, Ig-like spans 287–373 (PLITRHTHEM…GEATQIVDLH (87 aa)). A disulfide bridge links C308 with C357. Residues N330, N339, N382, N406, and N452 are each glycosylated (N-linked (GlcNAc...) asparagine). The disordered stretch occupies residues 385-414 (NHIHEPDPGSSDISTSTKSGSNTSSSNGDT). A compositionally biased stretch (low complexity) spans 393–414 (GSSDISTSTKSGSNTSSSNGDT). The Fibronectin type-III domain maps to 414–503 (TKLSQDKIVV…ITSLTATRVV (90 aa)). Residues 530-550 (IIIIGGIIVASVLVFIIILMI) form a helical membrane-spanning segment. At 551-719 (RYKVCNNNGQ…VQETQRLELI (169 aa)) the chain is on the cytoplasmic side. Residues 615 to 627 (ETCSSQDSSTTTS) are compositionally biased toward low complexity. The disordered stretch occupies residues 615–694 (ETCSSQDSST…SVTEGPTSKR (80 aa)). 2 stretches are compositionally biased toward polar residues: residues 628–641 (ALPP…SVSQ) and 649–677 (TKPS…TALQ).

This sequence belongs to the LRFN family. In terms of assembly, can form heteromeric complexes with LRFN1, LRFN2, LRFN3 and LFRN4. Able to form homomeric complexes across cell junctions, between adjacent cells. Does not interact with DLG1, DLG2, DLG3 and DLG4.

The protein localises to the membrane. Its function is as follows. Cell adhesion molecule that mediates homophilic cell-cell adhesion in a Ca(2+)-independent manner. Promotes neurite outgrowth in hippocampal neurons. This is Leucine-rich repeat and fibronectin type-III domain-containing protein 5 (LRFN5) from Homo sapiens (Human).